Reading from the N-terminus, the 513-residue chain is ATP synthase subunit alpha (513 aa).

169–176 is a binding site for ATP; the sequence is GDRQIGKT.

Belongs to the ATPase alpha/beta chains family. As to quaternary structure, F-type ATPases have 2 components, CF(1) - the catalytic core - and CF(0) - the membrane proton channel. CF(1) has five subunits: alpha(3), beta(3), gamma(1), delta(1), epsilon(1). CF(0) has three main subunits: a(1), b(2) and c(9-12). The alpha and beta chains form an alternating ring which encloses part of the gamma chain. CF(1) is attached to CF(0) by a central stalk formed by the gamma and epsilon chains, while a peripheral stalk is formed by the delta and b chains.

Its subcellular location is the cell inner membrane. The catalysed reaction is ATP + H2O + 4 H(+)(in) = ADP + phosphate + 5 H(+)(out). Produces ATP from ADP in the presence of a proton gradient across the membrane. The alpha chain is a regulatory subunit. The polypeptide is ATP synthase subunit alpha (Francisella tularensis subsp. holarctica (strain OSU18)).